Here is a 154-residue protein sequence, read N- to C-terminus: Ribonuclease H (154 aa).

Residues 9-150 (SHPHIIIYTD…ADALANKGVE (142 aa)) form the RNase H type-1 domain. The Mg(2+) site is built by Asp18, Glu56, Asp78, and Asp142.

It belongs to the RNase H family. As to quaternary structure, monomer. Mg(2+) is required as a cofactor.

It is found in the cytoplasm. It catalyses the reaction Endonucleolytic cleavage to 5'-phosphomonoester.. In terms of biological role, endonuclease that specifically degrades the RNA of RNA-DNA hybrids. This Polynucleobacter asymbioticus (strain DSM 18221 / CIP 109841 / QLW-P1DMWA-1) (Polynucleobacter necessarius subsp. asymbioticus) protein is Ribonuclease H.